The chain runs to 208 residues: N-(5'-phosphoribosyl)anthranilate isomerase (208 aa).

This sequence belongs to the TrpF family.

The enzyme catalyses N-(5-phospho-beta-D-ribosyl)anthranilate = 1-(2-carboxyphenylamino)-1-deoxy-D-ribulose 5-phosphate. The protein operates within amino-acid biosynthesis; L-tryptophan biosynthesis; L-tryptophan from chorismate: step 3/5. The protein is N-(5'-phosphoribosyl)anthranilate isomerase of Neisseria gonorrhoeae (strain NCCP11945).